Here is a 126-residue protein sequence, read N- to C-terminus: Glycine cleavage system H protein (126 aa).

One can recognise a Lipoyl-binding domain in the interval 22–104 (TVTIGITEYA…YEKAWMVKVE (83 aa)). Position 63 is an N6-lipoyllysine (Lys-63).

It belongs to the GcvH family. As to quaternary structure, the glycine cleavage system is composed of four proteins: P, T, L and H. It depends on (R)-lipoate as a cofactor.

In terms of biological role, the glycine cleavage system catalyzes the degradation of glycine. The H protein shuttles the methylamine group of glycine from the P protein to the T protein. Is also involved in protein lipoylation via its role as an octanoyl/lipoyl carrier protein intermediate. The polypeptide is Glycine cleavage system H protein (Staphylococcus saprophyticus subsp. saprophyticus (strain ATCC 15305 / DSM 20229 / NCIMB 8711 / NCTC 7292 / S-41)).